A 154-amino-acid polypeptide reads, in one-letter code: Probable archaeosortase D (154 aa).

The next 4 helical transmembrane spans lie at 6 to 26, 57 to 77, 91 to 111, and 125 to 145; these read AIYILRFLIYFFIFYYILKML, IIEISSPCTCSLEMALFLGYI, YSVFGLSIITISNILRIILII, and VISFIIFPIALFLNWFWIYLL. The active-site Acyl-thioester intermediate is the cysteine 64. Residue arginine 106 is the Proton donor of the active site.

The protein belongs to the exosortase/archaeosortase family. Archaeosortase D subfamily.

The protein resides in the cell membrane. In terms of biological role, transpeptidase that recognizes and modifies its substrate by proteolytic cleavage of a sorting signal. Following cleavage, a covalent intermediate is formed via a thioester bond between the archaeosortase and its substrate, which is then transferred and covalently attached to the cell membrane. This chain is Probable archaeosortase D, found in Methanocaldococcus jannaschii (strain ATCC 43067 / DSM 2661 / JAL-1 / JCM 10045 / NBRC 100440) (Methanococcus jannaschii).